Reading from the N-terminus, the 456-residue chain is Glutamate--tRNA ligase 2 (456 aa).

The short motif at 8–18 (PSPTGYIHIGN) is the 'HIGH' region element. Residues 249 to 253 (GLSKR) carry the 'KMSKS' region motif. K252 is a binding site for ATP.

The protein belongs to the class-I aminoacyl-tRNA synthetase family. Glutamate--tRNA ligase type 1 subfamily. As to quaternary structure, monomer.

It is found in the cytoplasm. The catalysed reaction is tRNA(Glu) + L-glutamate + ATP = L-glutamyl-tRNA(Glu) + AMP + diphosphate. In terms of biological role, catalyzes the attachment of glutamate to tRNA(Glu) in a two-step reaction: glutamate is first activated by ATP to form Glu-AMP and then transferred to the acceptor end of tRNA(Glu). The chain is Glutamate--tRNA ligase 2 from Bartonella bacilliformis (strain ATCC 35685 / KC583 / Herrer 020/F12,63).